Consider the following 199-residue polypeptide: MIEIPTGLPAELVPLSWLLGVWEGTGVVEYAVGDDVVRREFGQRISFSHDGLPHLNYSSYAWVEGDDGPVPFVTETGYWRLRRRVTDGDPGPAMLPPTGERPFTTADEVETLRNADGGFDVEVALVHPGGVSELYVGQVKSARIDLATDAVLRTEGAKAYTGATRLYGLVERDLLWAWDIAALGQPLRTHASGRVSHVD.

A GXWXGXG motif is present at residues 20 to 26; sequence GVWEGTG. Residue histidine 190 participates in heme b binding.

This sequence belongs to the nitrobindin family. As to quaternary structure, homodimer. It depends on heme b as a cofactor.

The catalysed reaction is peroxynitrite = nitrate. The protein operates within nitrogen metabolism. Functionally, heme-binding protein able to scavenge peroxynitrite and to protect free L-tyrosine against peroxynitrite-mediated nitration, by acting as a peroxynitrite isomerase that converts peroxynitrite to nitrate. Therefore, this protein likely plays a role in peroxynitrite sensing and in the detoxification of reactive nitrogen and oxygen species (RNS and ROS, respectively). Is able to bind nitric oxide (NO) in vitro, but may act as a sensor of peroxynitrite levels in vivo. The chain is Peroxynitrite isomerase from Clavibacter michiganensis subsp. michiganensis (strain NCPPB 382).